Consider the following 283-residue polypeptide: Bifunctional protein FolD (283 aa).

NADP(+) contacts are provided by residues Gly159 to Ser161, Ser184, and Ile225.

It belongs to the tetrahydrofolate dehydrogenase/cyclohydrolase family. Homodimer.

The catalysed reaction is (6R)-5,10-methylene-5,6,7,8-tetrahydrofolate + NADP(+) = (6R)-5,10-methenyltetrahydrofolate + NADPH. It carries out the reaction (6R)-5,10-methenyltetrahydrofolate + H2O = (6R)-10-formyltetrahydrofolate + H(+). Its pathway is one-carbon metabolism; tetrahydrofolate interconversion. Functionally, catalyzes the oxidation of 5,10-methylenetetrahydrofolate to 5,10-methenyltetrahydrofolate and then the hydrolysis of 5,10-methenyltetrahydrofolate to 10-formyltetrahydrofolate. This chain is Bifunctional protein FolD, found in Methanoculleus marisnigri (strain ATCC 35101 / DSM 1498 / JR1).